The following is a 384-amino-acid chain: Lipoyl synthase 2, chloroplastic (384 aa).

A chloroplast-targeting transit peptide spans 1–48 (MAAYCSRVYHHHPVSPSTMQGSLARPSIHAGSASLTFRARPNSVSIVR). The [4Fe-4S] cluster site is built by Cys108, Cys113, Cys119, Cys145, Cys149, Cys152, and Ser360. A Radical SAM core domain is found at 128 to 349 (GDGDGIATAT…KEYGESLGFL (222 aa)).

It belongs to the radical SAM superfamily. Lipoyl synthase family. [4Fe-4S] cluster is required as a cofactor.

It is found in the plastid. It localises to the chloroplast. The catalysed reaction is [[Fe-S] cluster scaffold protein carrying a second [4Fe-4S](2+) cluster] + N(6)-octanoyl-L-lysyl-[protein] + 2 oxidized [2Fe-2S]-[ferredoxin] + 2 S-adenosyl-L-methionine + 4 H(+) = [[Fe-S] cluster scaffold protein] + N(6)-[(R)-dihydrolipoyl]-L-lysyl-[protein] + 4 Fe(3+) + 2 hydrogen sulfide + 2 5'-deoxyadenosine + 2 L-methionine + 2 reduced [2Fe-2S]-[ferredoxin]. It functions in the pathway protein modification; protein lipoylation via endogenous pathway; protein N(6)-(lipoyl)lysine from octanoyl-[acyl-carrier-protein]: step 2/2. In terms of biological role, catalyzes the radical-mediated insertion of two sulfur atoms into the C-6 and C-8 positions of the octanoyl moiety bound to the lipoyl domains of lipoate-dependent enzymes, thereby converting the octanoylated domains into lipoylated derivatives. In Oryza sativa subsp. indica (Rice), this protein is Lipoyl synthase 2, chloroplastic.